The sequence spans 453 residues: Zinc finger protein Pegasus (453 aa).

3 C2H2-type zinc fingers span residues Leu-101–His-123, His-129–His-151, and Tyr-157–His-180. Residues Gly-279–Ser-293 show a composition bias toward polar residues. Residues Gly-279 to Pro-375 form a disordered region. Positions Cys-315–Pro-332 are enriched in low complexity. Polar residues predominate over residues Arg-356–Ser-368. 2 C2H2-type zinc fingers span residues His-383 to His-405 and Phe-411 to His-438.

This sequence belongs to the Ikaros C2H2-type zinc-finger protein family. In terms of assembly, probably self-associates.

The protein resides in the nucleus. Transcriptional repressor that binds the core 5'GNNTGTNG-3' DNA consensus sequence. The protein is Zinc finger protein Pegasus (ikzf5) of Xenopus laevis (African clawed frog).